A 71-amino-acid polypeptide reads, in one-letter code: Small ribosomal subunit protein bS21 (71 aa).

Residues 34–44 (RREHYEKPTSE) show a composition bias toward basic and acidic residues. The interval 34–71 (RREHYEKPTSERKRKKAAAVKRHAKKLSRDNARRTRLY) is disordered. Positions 45–59 (RKRKKAAAVKRHAKK) are enriched in basic residues. The span at 60 to 71 (LSRDNARRTRLY) shows a compositional bias: basic and acidic residues.

The protein belongs to the bacterial ribosomal protein bS21 family.

This chain is Small ribosomal subunit protein bS21, found in Idiomarina loihiensis (strain ATCC BAA-735 / DSM 15497 / L2-TR).